A 308-amino-acid polypeptide reads, in one-letter code: Ornithine carbamoyltransferase (308 aa).

Carbamoyl phosphate is bound by residues 56 to 59, Q83, R107, and 134 to 137; these read STRT and HPCQ. Residues N165, D225, and 229–230 each bind L-ornithine; that span reads SM. Carbamoyl phosphate-binding positions include 266-267 and R294; that span reads CL.

It belongs to the aspartate/ornithine carbamoyltransferase superfamily. OTCase family.

Its subcellular location is the cytoplasm. The catalysed reaction is carbamoyl phosphate + L-ornithine = L-citrulline + phosphate + H(+). It functions in the pathway amino-acid biosynthesis; L-arginine biosynthesis; L-arginine from L-ornithine and carbamoyl phosphate: step 1/3. Reversibly catalyzes the transfer of the carbamoyl group from carbamoyl phosphate (CP) to the N(epsilon) atom of ornithine (ORN) to produce L-citrulline. The chain is Ornithine carbamoyltransferase from Roseobacter denitrificans (strain ATCC 33942 / OCh 114) (Erythrobacter sp. (strain OCh 114)).